The primary structure comprises 498 residues: ATP synthase subunit beta, chloroplastic (498 aa).

Position 172–179 (172–179 (GGAGVGKT)) interacts with ATP.

This sequence belongs to the ATPase alpha/beta chains family. In terms of assembly, F-type ATPases have 2 components, CF(1) - the catalytic core - and CF(0) - the membrane proton channel. CF(1) has five subunits: alpha(3), beta(3), gamma(1), delta(1), epsilon(1). CF(0) has four main subunits: a(1), b(1), b'(1) and c(9-12).

Its subcellular location is the plastid. It is found in the chloroplast thylakoid membrane. The enzyme catalyses ATP + H2O + 4 H(+)(in) = ADP + phosphate + 5 H(+)(out). Functionally, produces ATP from ADP in the presence of a proton gradient across the membrane. The catalytic sites are hosted primarily by the beta subunits. In Calycanthus floridus (Eastern sweetshrub), this protein is ATP synthase subunit beta, chloroplastic.